A 270-amino-acid chain; its full sequence is uncharacterized protein (270 aa).

The disordered stretch occupies residues 235–270 (LADSDLEADSDDSESFEFVENPEPSENGSEPTIKND). The span at 238 to 251 (SDLEADSDDSESFE) shows a compositional bias: acidic residues. The span at 255–270 (NPEPSENGSEPTIKND) shows a compositional bias: low complexity.

This is an uncharacterized protein from Halorubrum sp. PV6 (HRPV-1).